Reading from the N-terminus, the 337-residue chain is uncharacterized protein (337 aa).

Residues 5–235 (VEFDNVSRLY…PRTPFVAGFV (231 aa)) form the ABC transporter domain. Position 37–44 (37–44 (GPSGSGKT)) interacts with ATP.

Belongs to the ABC transporter superfamily.

Probably part of the ABC transporter complex YdcSTUV. Probably responsible for energy coupling to the transport system. This is an uncharacterized protein from Escherichia coli (strain K12).